Reading from the N-terminus, the 115-residue chain is Large ribosomal subunit protein P2 (115 aa).

M1 carries the post-translational modification N-acetylmethionine. S17 and S19 each carry phosphoserine. K21 is subject to N6-acetyllysine; alternate. At K21 the chain carries N6-succinyllysine; alternate. A compositionally biased stretch (low complexity) spans 76–90 (APGSAAPAAGSAPAA). The disordered stretch occupies residues 76 to 115 (APGSAAPAAGSAPAAAEERKEEKKEESEESDDDMGFGLFD). A phosphoserine mark is found at S79 and S86. Basic and acidic residues predominate over residues 91–101 (AEERKEEKKEE). Phosphoserine occurs at positions 102 and 105.

The protein belongs to the eukaryotic ribosomal protein P1/P2 family. As to quaternary structure, heterodimer with RPLP1 at the lateral ribosomal stalk of the large ribosomal subunit.

In terms of biological role, plays an important role in the elongation step of protein synthesis. This chain is Large ribosomal subunit protein P2 (RPLP2), found in Equus caballus (Horse).